The primary structure comprises 566 residues: Ubiquitin carboxyl-terminal hydrolase 21 (566 aa).

2 stretches are compositionally biased toward basic and acidic residues: residues 1 to 14 (MPQA…RTRE) and 58 to 70 (PPDE…ELGR). Disordered stretches follow at residues 1–103 (MPQA…LPLP) and 146–169 (PEPP…PPTL). Low complexity-rich tracts occupy residues 71–81 (GRTSGSRPRGP) and 151–160 (LRRSTSLRRL). A Nuclear export signal motif is present at residues 134–152 (ELGAALSRLALRPEPPTLR). One can recognise a USP domain in the interval 212 to 559 (VGLRNLGNTC…EGYVLFYQLM (348 aa)). Catalysis depends on C221, which acts as the Nucleophile. Positions 324–349 (APPILASGPVPSPPRRGGGALHEEPE) are disordered. Positions 385, 388, 438, and 441 each coordinate Zn(2+). H519 (proton acceptor) is an active-site residue.

Belongs to the peptidase C19 family. USP21 subfamily. In terms of assembly, interacts with BEND3.

Its subcellular location is the cytoplasm. The protein resides in the nucleus. The catalysed reaction is Thiol-dependent hydrolysis of ester, thioester, amide, peptide and isopeptide bonds formed by the C-terminal Gly of ubiquitin (a 76-residue protein attached to proteins as an intracellular targeting signal).. Functionally, deubiquitinates histone H2A, a specific tag for epigenetic transcriptional repression, thereby acting as a coactivator. Deubiquitination of histone H2A releaves the repression of di- and trimethylation of histone H3 at 'Lys-4', resulting in regulation of transcriptional initiation. Regulates gene expression via histone H2A deubiquitination. Deubiquitinates BAZ2A/TIP5 leading to its stabilization. Also capable of removing NEDD8 from NEDD8 conjugates but has no effect on Sentrin-1 conjugates. Also acts as a negative regulator of the ribosome quality control (RQC) by mediating deubiquitination of 40S ribosomal proteins RPS10/eS10 and RPS20/uS10, thereby antagonizing ZNF598-mediated 40S ubiquitination. The polypeptide is Ubiquitin carboxyl-terminal hydrolase 21 (Mus musculus (Mouse)).